Consider the following 534-residue polypeptide: NAD(P)H-quinone oxidoreductase chain 4 1 (534 aa).

A run of 14 helical transmembrane segments spans residues 6–26, 34–54, 87–107, 113–133, 136–156, 169–189, 209–229, 243–263, 277–297, 311–331, 332–352, 376–396, 418–438, and 464–484; these read IPWLTTAIAFPLLAALVIPLI, IRWYTLGVALTDFALLVTAFW, LSMPLIILATLITTLATLAAW, PKLFAGLILVMLSAQIGVFAV, LLLFFIMWELELVPVYLLISI, FILYTALGSVFILASTLALAF, ALELLAYAGFLIGFGVKLPIF, SAPVSMILAGVLLKMGGYGLI, FAPLLIVLGIVNIVYGALTAF, ISHMGFVLVGIASFTDLGMNG, AVLQMLSHGFIAAALFFLSGV, FAMFTAAAMASLALPGMSGFV, IAIFLTAVGVILTPIYLLSML, and IFVAVCLLAPIIAIGLYPKLA.

Belongs to the complex I subunit 4 family.

It localises to the cellular thylakoid membrane. The enzyme catalyses a plastoquinone + NADH + (n+1) H(+)(in) = a plastoquinol + NAD(+) + n H(+)(out). It catalyses the reaction a plastoquinone + NADPH + (n+1) H(+)(in) = a plastoquinol + NADP(+) + n H(+)(out). Its function is as follows. NDH-1 shuttles electrons from NAD(P)H, via FMN and iron-sulfur (Fe-S) centers, to quinones in the respiratory chain. The immediate electron acceptor for the enzyme in this species is believed to be plastoquinone. Couples the redox reaction to proton translocation (for every two electrons transferred, four hydrogen ions are translocated across the cytoplasmic membrane), and thus conserves the redox energy in a proton gradient. The chain is NAD(P)H-quinone oxidoreductase chain 4 1 from Picosynechococcus sp. (strain ATCC 27264 / PCC 7002 / PR-6) (Agmenellum quadruplicatum).